The sequence spans 479 residues: U3 snoRNP-associated protein-like EMB2271 (479 aa).

Residues 1 to 73 (MKLEKKKGIG…AHETVGEKRK (73 aa)) form a disordered region. Over residues 8-17 (GIGAKRRGKK) the composition is skewed to basic residues. A compositionally biased stretch (basic and acidic residues) spans 18–38 (SSIDHDPFLEEETEKRRKFNY). Residues 39 to 51 (DDDDDIESVESEE) show a composition bias toward acidic residues. The segment covering 52–73 (EGKVGEEVEDEFAHETVGEKRK) has biased composition (basic and acidic residues). WD repeat units follow at residues 143-182 (KHQH…SDEY), 204-243 (RHNK…HVQA), 246-285 (GHCG…YIES), 288-326 (GHQS…RLIY), 328-366 (ASES…PVFI), 386-425 (PACS…SAIQ), and 431-471 (PLPG…QNGV).

This sequence belongs to the WD repeat RRP9 family.

It is found in the nucleus. Its subcellular location is the nucleolus. Functionally, component of a nucleolar small nuclear ribonucleoprotein particle (snoRNP) thought to participate in the processing and modification of pre-ribosomal RNA. Essential for embryogenesis. May function during late embryogenesis. In Arabidopsis thaliana (Mouse-ear cress), this protein is U3 snoRNP-associated protein-like EMB2271.